Reading from the N-terminus, the 217-residue chain is uncharacterized protein (217 aa).

The N-terminal stretch at 1 to 32 is a signal peptide; sequence MPITKATPLFLRYRLKGFVFLTLLLVQGVFTA. Cys-33 carries the N-palmitoyl cysteine lipid modification. Cys-33 carries the S-diacylglycerol cysteine lipid modification.

It belongs to the MG067/MG068/MG395 family.

It is found in the cell membrane. This is an uncharacterized protein from Mycoplasma pneumoniae (strain ATCC 29342 / M129 / Subtype 1) (Mycoplasmoides pneumoniae).